We begin with the raw amino-acid sequence, 102 residues long: Large ribosomal subunit protein bL21 (102 aa).

The protein belongs to the bacterial ribosomal protein bL21 family. In terms of assembly, part of the 50S ribosomal subunit. Contacts protein L20.

Functionally, this protein binds to 23S rRNA in the presence of protein L20. This Bifidobacterium longum (strain DJO10A) protein is Large ribosomal subunit protein bL21.